The primary structure comprises 176 residues: Phosphopantetheine adenylyltransferase (176 aa).

S8 provides a ligand contact to substrate. ATP-binding positions include 8–9 (SF) and H16. Residues K40, T72, and R86 each contribute to the substrate site. Residues 87-89 (GLR), E97, and 122-128 (YSFLSSS) each bind ATP.

The protein belongs to the bacterial CoaD family. Homohexamer. The cofactor is Mg(2+).

The protein resides in the cytoplasm. It catalyses the reaction (R)-4'-phosphopantetheine + ATP + H(+) = 3'-dephospho-CoA + diphosphate. It participates in cofactor biosynthesis; coenzyme A biosynthesis; CoA from (R)-pantothenate: step 4/5. In terms of biological role, reversibly transfers an adenylyl group from ATP to 4'-phosphopantetheine, yielding dephospho-CoA (dPCoA) and pyrophosphate. The sequence is that of Phosphopantetheine adenylyltransferase from Acaryochloris marina (strain MBIC 11017).